Here is a 338-residue protein sequence, read N- to C-terminus: N-acetylmuramate/N-acetylglucosamine kinase (338 aa).

Belongs to the kinase AmgK family.

The enzyme catalyses N-acetyl-D-muramate + ATP = N-acetyl-alpha-D-muramate 1-phosphate + ADP + H(+). It catalyses the reaction N-acetyl-D-glucosamine + ATP = N-acetyl-alpha-D-glucosamine 1-phosphate + ADP + H(+). It participates in cell wall biogenesis; peptidoglycan recycling. Sugar kinase that catalyzes the ATP-dependent phosphorylation of N-acetylmuramate (MurNAc) and N-acetylglucosamine (GlcNAc) at its C1 hydroxyl group, leading to MurNAc alpha-1P and GlcNAc alpha-1P, respectively. Is involved in peptidoglycan recycling as part of a cell wall recycling pathway that bypasses de novo biosynthesis of the peptidoglycan precursor UDP-MurNAc. Plays a role in intrinsic resistance to fosfomycin, which targets the de novo synthesis of UDP-MurNAc. The chain is N-acetylmuramate/N-acetylglucosamine kinase from Pseudomonas aeruginosa (strain ATCC 15692 / DSM 22644 / CIP 104116 / JCM 14847 / LMG 12228 / 1C / PRS 101 / PAO1).